The sequence spans 396 residues: Na(+)/H(+) antiporter NhaA 2 (396 aa).

A run of 11 helical transmembrane segments spans residues L17 to F37, L62 to I82, S98 to L118, G125 to G145, L154 to F174, L179 to Y199, I209 to A229, F268 to F288, L296 to F316, I337 to L357, and V368 to I388.

Belongs to the NhaA Na(+)/H(+) (TC 2.A.33) antiporter family.

It localises to the cell inner membrane. The catalysed reaction is Na(+)(in) + 2 H(+)(out) = Na(+)(out) + 2 H(+)(in). Its function is as follows. Na(+)/H(+) antiporter that extrudes sodium in exchange for external protons. This chain is Na(+)/H(+) antiporter NhaA 2, found in Aliarcobacter butzleri (strain RM4018) (Arcobacter butzleri).